We begin with the raw amino-acid sequence, 302 residues long: Deoxyribonuclease-1-like 1 (302 aa).

An N-terminal signal peptide occupies residues 1-18; it reads MHYPTALLFLILANGAQA. Residues glutamate 97 and histidine 148 contribute to the active site. Cysteine 187 and cysteine 224 are joined by a disulfide. Asparagine 261 carries N-linked (GlcNAc...) asparagine glycosylation.

This sequence belongs to the DNase I family. In terms of tissue distribution, highest levels in skeletal and cardiac muscles. Detectable in all other tissues tested except brain.

It localises to the endoplasmic reticulum. The chain is Deoxyribonuclease-1-like 1 (DNASE1L1) from Homo sapiens (Human).